Here is a 513-residue protein sequence, read N- to C-terminus: Histidine ammonia-lyase (513 aa).

The 5-imidazolinone (Ala-Gly) cross-link spans 144–146 (ASG). Serine 145 carries the 2,3-didehydroalanine (Ser) modification.

This sequence belongs to the PAL/histidase family. Contains an active site 4-methylidene-imidazol-5-one (MIO), which is formed autocatalytically by cyclization and dehydration of residues Ala-Ser-Gly.

It is found in the cytoplasm. It catalyses the reaction L-histidine = trans-urocanate + NH4(+). It functions in the pathway amino-acid degradation; L-histidine degradation into L-glutamate; N-formimidoyl-L-glutamate from L-histidine: step 1/3. The chain is Histidine ammonia-lyase from Streptococcus pyogenes serotype M18 (strain MGAS8232).